The chain runs to 338 residues: Starch-binding domain-containing protein 1 (338 aa).

The Extracellular segment spans residues 1–6 (MGAVWS). Residues 7 to 23 (ALLVGGGLAGALILWLL) traverse the membrane as a helical segment. Residues 24 to 338 (RGDSGAPGKD…KVVHGWWGIH (315 aa)) lie on the Cytoplasmic side of the membrane. 2 disordered regions span residues 30-73 (PGKD…RELV) and 120-148 (KIPD…WRLP). Over residues 36 to 52 (AEPPQKGAPPGEAAAPG) the composition is skewed to low complexity. Residues 53–62 (DGPGGGGSGG) show a composition bias toward gly residues. Serine 68 carries the post-translational modification Phosphoserine. Over residues 122-132 (PDTHSRADSEA) the composition is skewed to basic and acidic residues. Phosphoserine occurs at positions 140, 167, and 179. An LIR motif is present at residues 185–191 (HEDWEVV). Residues serine 195, serine 196, serine 205, serine 209, serine 212, serine 220, and serine 223 each carry the phosphoserine modification. A CBM20 domain is found at 238-337 (SLKPQQVSIQ…DKVVHGWWGI (100 aa)).

As to quaternary structure, interacts with the ATG8 family proteins GABARAP and GABARAPL1. Interacts with several glycogen-associated proteins, such as GYS2 (liver glycogen synthase), GDE (glycogen debranching enzyme), GBE1 (glycogen branching enzyme 1) and EPM2A (Laforin). In terms of processing, ubiquitinated, which leads to proteasomal degradation. In terms of tissue distribution, expressed at high level in glycogen-accumulating organs such as muscle and liver. Trace signals are also found in brain, kidney, and pancreas.

Its subcellular location is the preautophagosomal structure membrane. It is found in the endoplasmic reticulum membrane. The protein localises to the cell membrane. The protein resides in the sarcolemma. It localises to the T-tubule. Acts as a cargo receptor for glycogen. Delivers its cargo to an autophagic pathway called glycophagy, resulting in the transport of glycogen to lysosomes. This is Starch-binding domain-containing protein 1 from Mus musculus (Mouse).